The primary structure comprises 318 residues: ATP synthase gamma chain (318 aa).

It belongs to the ATPase gamma chain family. In terms of assembly, F-type ATPases have 2 components, CF(1) - the catalytic core - and CF(0) - the membrane proton channel. CF(1) has five subunits: alpha(3), beta(3), gamma(1), delta(1), epsilon(1). CF(0) has three main subunits: a, b and c.

The protein resides in the cell membrane. Its function is as follows. Produces ATP from ADP in the presence of a proton gradient across the membrane. The gamma chain is believed to be important in regulating ATPase activity and the flow of protons through the CF(0) complex. This is ATP synthase gamma chain from Lactobacillus johnsonii (strain CNCM I-12250 / La1 / NCC 533).